We begin with the raw amino-acid sequence, 340 residues long: Ribosomal RNA large subunit methyltransferase F (340 aa).

Residues 1 to 36 (MNAPRTPKPARKKPDSATPAKPVEPRKEASLHPRNR) are disordered.

Belongs to the methyltransferase superfamily. METTL16/RlmF family.

Its subcellular location is the cytoplasm. It catalyses the reaction adenosine(1618) in 23S rRNA + S-adenosyl-L-methionine = N(6)-methyladenosine(1618) in 23S rRNA + S-adenosyl-L-homocysteine + H(+). In terms of biological role, specifically methylates the adenine in position 1618 of 23S rRNA. The protein is Ribosomal RNA large subunit methyltransferase F of Pseudomonas fluorescens (strain Pf0-1).